The chain runs to 519 residues: MAKERDQNTKDKNLLICFLWNFSAELKLALMALLVLCTLATLLPFLPSSFSISASELRFCISRIAVNSTSVNFTTVVEKPVLDNAVKLTEKPVLDNGVTKQPLTEEKVLNNGVIKRTFTGYGWAAYNFVLMNAYRGGVNTFAVIGLSSKPLHVYSHPTYRCEWIPLNQSDNRILTDGTKILTDWGYGRVYTTVVVNCTFPSNTVINPKNTGGTLLLHATTGDTDRNITDSIPVLTETPNTVDFALYESNLRRREKYDYLYCGSSLYGNLSPQRIREWIAYHVRFFGERSHFVLHDAGGITEEVFEVLKPWIELGRVTVHDIREQERFDGYYHNQFMVVNDCLHRYRFMAKWMFFFDVDEFIYVPAKSSISSVMVSLEEYSQFTIEQMPMSSQLCYDGDGPARTYRKWGFEKLAYRDVKKVPRRDRKYAVQPRNVFATGVHMSQHLQGKTYHRAEGKIRYFHYHGSISQRREPCRHLYNGTRIVHENNPYVLDTTMRDIGLAVKTFEIRTIGDRLLRTRQ.

The chain crosses the membrane as a helical span at residues 28–48 (LALMALLVLCTLATLLPFLPS). In terms of domain architecture, GT92 spans 257–471 (DYLYCGSSLY…YHGSISQRRE (215 aa)).

This sequence belongs to the glycosyltransferase 92 family. In terms of tissue distribution, expressed in the midrib of mature leaves, root vasculature, flower filaments, siliques and seeds.

The protein localises to the golgi apparatus membrane. Its function is as follows. Involved in the biosynthesis of beta-1,4-galactan. Beta-1,4-galactans are abundant polysaccharides in plant cell walls and are found as side-chain of rhamnogalacturonan I, which is a major component of pectin. The polypeptide is Galactan beta-1,4-galactosyltransferase GALS2 (Arabidopsis thaliana (Mouse-ear cress)).